Consider the following 214-residue polypeptide: Transmembrane emp24 domain-containing protein p24delta9 (214 aa).

The signal sequence occupies residues 1 to 24 (MFLRSLNLCTILLFLAISSQVSQS). Topologically, residues 25-181 (LHFELQSGRT…QNLNRATNSK (157 aa)) are lumenal. The 116-residue stretch at 34 to 149 (TKCISEDIKS…VEVMEFDVKR (116 aa)) folds into the GOLD domain. Positions 164–177 (LREREEEMQNLNRA) form a coiled coil. R167 is subject to Omega-N-methylated arginine. A helical transmembrane segment spans residues 182-202 (MAWLSFLSLFVCLGVAGMQFV). Residues 203–214 (HLKTFFEKKKVI) lie on the Cytoplasmic side of the membrane. The COPII vesicle coat-binding motif lies at 207–208 (FF). A COPI vesicle coat-binding motif is present at residues 207 to 214 (FFEKKKVI).

Belongs to the EMP24/GP25L family. As to quaternary structure, probably oligomerizes with other members of the EMP24/GP25L family. Associates with the COPI vesicle coat (coatomer). Associates with the COPII vesicle coat (coatomer).

The protein resides in the endoplasmic reticulum membrane. It is found in the golgi apparatus. The protein localises to the cis-Golgi network membrane. Its subcellular location is the golgi stack membrane. In terms of biological role, involved in vesicular protein trafficking. Mainly functions in the early secretory pathway. Thought to act as cargo receptor at the lumenal side for incorporation of secretory cargo molecules into transport vesicles and to be involved in vesicle coat formation at the cytoplasmic side. The polypeptide is Transmembrane emp24 domain-containing protein p24delta9 (Arabidopsis thaliana (Mouse-ear cress)).